A 101-amino-acid chain; its full sequence is Urease subunit beta (101 aa).

This sequence belongs to the urease beta subunit family. As to quaternary structure, heterotrimer of UreA (gamma), UreB (beta) and UreC (alpha) subunits. Three heterotrimers associate to form the active enzyme.

Its subcellular location is the cytoplasm. The catalysed reaction is urea + 2 H2O + H(+) = hydrogencarbonate + 2 NH4(+). The protein operates within nitrogen metabolism; urea degradation; CO(2) and NH(3) from urea (urease route): step 1/1. This is Urease subunit beta from Paraburkholderia xenovorans (strain LB400).